The chain runs to 509 residues: Light-independent protochlorophyllide reductase subunit B (509 aa).

Aspartate 36 contributes to the [4Fe-4S] cluster binding site. Aspartate 298 serves as the catalytic Proton donor. 433–434 (GM) is a substrate binding site.

Belongs to the ChlB/BchB/BchZ family. In terms of assembly, protochlorophyllide reductase is composed of three subunits; ChlL, ChlN and ChlB. Forms a heterotetramer of two ChlB and two ChlN subunits. It depends on [4Fe-4S] cluster as a cofactor.

The protein localises to the plastid. The protein resides in the chloroplast. It catalyses the reaction chlorophyllide a + oxidized 2[4Fe-4S]-[ferredoxin] + 2 ADP + 2 phosphate = protochlorophyllide a + reduced 2[4Fe-4S]-[ferredoxin] + 2 ATP + 2 H2O. It functions in the pathway porphyrin-containing compound metabolism; chlorophyll biosynthesis (light-independent). Its function is as follows. Component of the dark-operative protochlorophyllide reductase (DPOR) that uses Mg-ATP and reduced ferredoxin to reduce ring D of protochlorophyllide (Pchlide) to form chlorophyllide a (Chlide). This reaction is light-independent. The NB-protein (ChlN-ChlB) is the catalytic component of the complex. This is Light-independent protochlorophyllide reductase subunit B from Ephedra altissima (High-climbing jointfir).